The primary structure comprises 648 residues: Nucleoside triphosphatase I (648 aa).

Residues 48 to 213 (FIGLKNLNSM…NNLIGLLRPN (166 aa)) form the Helicase ATP-binding domain. 61–68 (WDTGTGKT) contributes to the ATP binding site. The DEXH box signature appears at 151–154 (DEVH). Positions 379–542 (YIEACRIILN…KINVVFDLLK (164 aa)) constitute a Helicase C-terminal domain. Positions 468–534 (DIIILDMPWN…DIIKNKQGKI (67 aa)) are binding to the cap-specific mRNA (nucleoside-2'-O-)-methyltransferase.

Belongs to the helicase family. NPH I subfamily. In terms of assembly, monomer. Interacts (via C-terminus) with RAP94 (via N-terminus). Interacts with the cap-specific mRNA (nucleoside-2'-O-)-methyltransferase.

Its subcellular location is the virion. The catalysed reaction is a ribonucleoside 5'-triphosphate + H2O = a ribonucleoside 5'-diphosphate + phosphate + H(+). In terms of biological role, DNA-dependent ATPase required for providing the needed energy to achieve the termination of early transcripts. Acts in concert with the RAP94 subunit of the virion RNA polymerase and the capping enzyme/VTF to catalyze release of UUUUUNU-containing nascent RNA from the elongation complex. NPH-I must bind ssDNA in order to exhibit ATPase activity. The chain is Nucleoside triphosphatase I (NPH1) from Choristoneura fumiferana (Spruce budworm moth).